Consider the following 113-residue polypeptide: U11-theraphotoxin-Hhn1r (113 aa).

The signal sequence occupies residues 1-21 (MNTVRVTFLLVFVLAVSLGQA). Positions 22-74 (DKDENRMEMQEKTEQGKSYLDFAENLLLQKLEELEAKLLEEDSEESRNSRQKR) are excised as a propeptide. The segment at 61–83 (EEDSEESRNSRQKRCIGEGVPCD) is disordered. 3 cysteine pairs are disulfide-bonded: C75–C90, C82–C95, and C89–C110.

It belongs to the neurotoxin 14 (magi-1) family. 01 (HNTX-16) subfamily. In terms of tissue distribution, expressed by the venom gland.

The protein localises to the secreted. Its function is as follows. Probable ion channel inhibitor. The sequence is that of U11-theraphotoxin-Hhn1r from Cyriopagopus hainanus (Chinese bird spider).